Reading from the N-terminus, the 92-residue chain is Small ribosomal subunit protein uS19 (92 aa).

It belongs to the universal ribosomal protein uS19 family.

Its function is as follows. Protein S19 forms a complex with S13 that binds strongly to the 16S ribosomal RNA. This Rhodopseudomonas palustris (strain BisB18) protein is Small ribosomal subunit protein uS19.